The following is a 163-amino-acid chain: Nucleotide-binding protein RER_17110 (163 aa).

It belongs to the YajQ family.

Its function is as follows. Nucleotide-binding protein. The chain is Nucleotide-binding protein RER_17110 from Rhodococcus erythropolis (strain PR4 / NBRC 100887).